A 452-amino-acid polypeptide reads, in one-letter code: tRNA modification GTPase MnmE (452 aa).

(6S)-5-formyl-5,6,7,8-tetrahydrofolate is bound by residues arginine 22, glutamate 80, and lysine 119. In terms of domain architecture, TrmE-type G spans 213–375; that stretch reads GVRTVIVGKP…LENKIYEKFF (163 aa). Asparagine 223 serves as a coordination point for K(+). Residues 223-228, 242-248, and 267-270 each bind GTP; these read NSGKST, TDIPGTT, and DTAG. Position 227 (serine 227) interacts with Mg(2+). Positions 242, 244, and 247 each coordinate K(+). Threonine 248 contributes to the Mg(2+) binding site. A (6S)-5-formyl-5,6,7,8-tetrahydrofolate-binding site is contributed by lysine 452.

The protein belongs to the TRAFAC class TrmE-Era-EngA-EngB-Septin-like GTPase superfamily. TrmE GTPase family. In terms of assembly, homodimer. Heterotetramer of two MnmE and two MnmG subunits. K(+) is required as a cofactor.

The protein localises to the cytoplasm. Its function is as follows. Exhibits a very high intrinsic GTPase hydrolysis rate. Involved in the addition of a carboxymethylaminomethyl (cmnm) group at the wobble position (U34) of certain tRNAs, forming tRNA-cmnm(5)s(2)U34. This is tRNA modification GTPase MnmE from Petrotoga mobilis (strain DSM 10674 / SJ95).